A 101-amino-acid chain; its full sequence is Apolipoprotein C-II (101 aa).

An N-terminal signal peptide occupies residues 1 to 22; sequence MGTRLLPALFLVLLVLGFEVQG. The interval 23–38 is O-glycosylated at one site; the sequence is TQQPQQDEMPSPTFLT. Residues 66–74 form a lipid binding region; sequence AVDEKLRDL. The interval 78-101 is lipoprotein lipase cofactor; it reads STAAMSTYTGIFTDQVLSVLKGEE.

Belongs to the apolipoprotein C2 family. Post-translationally, proapolipoprotein C-II is synthesized as a sialic acid containing glycoprotein which is subsequently desialylated prior to its proteolytic processing. Proapolipoprotein C-II, the major form found in plasma undergoes proteolytic cleavage of its N-terminal hexapeptide to generate apolipoprotein C-II, which occurs as the minor form in plasma. As to expression, liver and intestine.

It is found in the secreted. Component of chylomicrons, very low-density lipoproteins (VLDL), low-density lipoproteins (LDL), and high-density lipoproteins (HDL) in plasma. Plays an important role in lipoprotein metabolism as an activator of lipoprotein lipase. Both proapolipoprotein C-II and apolipoprotein C-II can activate lipoprotein lipase. In normolipidemic individuals, it is mainly distributed in the HDL, whereas in hypertriglyceridemic individuals, predominantly found in the VLDL and LDL. The chain is Apolipoprotein C-II (APOC2) from Homo sapiens (Human).